The primary structure comprises 476 residues: Glutamate mutase epsilon subunit (476 aa).

Arg-62 is an L-glutamate binding site. Gly-64 serves as a coordination point for adenosylcob(III)alamin. Arg-96 provides a ligand contact to L-glutamate. Asn-119 provides a ligand contact to adenosylcob(III)alamin. L-glutamate is bound by residues 145-146 (RH), Glu-167, and Tyr-173. Position 176 (Pro-176) interacts with adenosylcob(III)alamin. Tyr-177 provides a ligand contact to L-glutamate. Adenosylcob(III)alamin-binding residues include Phe-289, Lys-318, and Glu-322.

This sequence belongs to the methylaspartate mutase GlmE subunit family. In terms of assembly, heterotetramer composed of 2 epsilon subunits (GlmE) and 2 sigma subunits (GlmS). GlmE exists as a homodimer and GlmS as a monomer. The cofactor is adenosylcob(III)alamin.

The catalysed reaction is (2S,3S)-3-methyl-L-aspartate = L-glutamate. The protein operates within amino-acid degradation; L-glutamate degradation via mesaconate pathway; acetate and pyruvate from L-glutamate: step 1/4. Its function is as follows. Catalyzes the carbon skeleton rearrangement of L-glutamate to L-threo-3-methylaspartate ((2S,3S)-3-methylaspartate). In Halobacterium salinarum (strain ATCC 700922 / JCM 11081 / NRC-1) (Halobacterium halobium), this protein is Glutamate mutase epsilon subunit.